A 395-amino-acid polypeptide reads, in one-letter code: Flap endonuclease 1 (395 aa).

Positions 1-104 are N-domain; the sequence is MGIKHLYQII…GELAKRIARK (104 aa). Residue Asp34 participates in Mg(2+) binding. 2 residues coordinate DNA: Arg47 and Arg70. Residue Asp86 participates in Mg(2+) binding. The tract at residues 103–123 is disordered; sequence RKQEAAEQHEEAKETGTTEDV. Positions 122 to 253 are I-domain; it reads DVEKFSRRTV…NTALKLIRDH (132 aa). Positions 158, 160, 179, and 181 each coordinate Mg(2+). Glu158 lines the DNA pocket. Gly231 and Asp233 together coordinate DNA. Asp233 contacts Mg(2+). Residues 341–349 are interaction with PCNA; the sequence is QQSRLEGFF. Basic and acidic residues predominate over residues 356–389; that stretch reads DEEKASLKRKHEEKLEAAKKKKKEDAKAKREAKS. A disordered region spans residues 356 to 395; that stretch reads DEEKASLKRKHEEKLEAAKKKKKEDAKAKREAKSRPKGTA.

The protein belongs to the XPG/RAD2 endonuclease family. FEN1 subfamily. Interacts with PCNA. Three molecules of FEN1 bind to one PCNA trimer with each molecule binding to one PCNA monomer. PCNA stimulates the nuclease activity without altering cleavage specificity. Mg(2+) serves as cofactor. Post-translationally, phosphorylated. Phosphorylation upon DNA damage induces relocalization to the nuclear plasma.

The protein resides in the nucleus. Its subcellular location is the nucleolus. The protein localises to the nucleoplasm. It is found in the mitochondrion. Functionally, structure-specific nuclease with 5'-flap endonuclease and 5'-3' exonuclease activities involved in DNA replication and repair. During DNA replication, cleaves the 5'-overhanging flap structure that is generated by displacement synthesis when DNA polymerase encounters the 5'-end of a downstream Okazaki fragment. It enters the flap from the 5'-end and then tracks to cleave the flap base, leaving a nick for ligation. Also involved in the long patch base excision repair (LP-BER) pathway, by cleaving within the apurinic/apyrimidinic (AP) site-terminated flap. Acts as a genome stabilization factor that prevents flaps from equilibrating into structures that lead to duplications and deletions. Also possesses 5'-3' exonuclease activity on nicked or gapped double-stranded DNA, and exhibits RNase H activity. Also involved in replication and repair of rDNA and in repairing mitochondrial DNA. The polypeptide is Flap endonuclease 1 (Uncinocarpus reesii (strain UAMH 1704)).